We begin with the raw amino-acid sequence, 2727 residues long: E3 ubiquitin-protein ligase Ufd4 (2727 aa).

Disordered stretches follow at residues 247–271 (THSSLTAAGTQPTSSSQPAATTNSD) and 365–389 (RGSNNPNQGQLAPRPRRNNTNTDRT). A compositionally biased stretch (polar residues) spans 365–374 (RGSNNPNQGQ). ANK repeat units lie at residues 422–451 (VGQTLLNWASAFGTLEMVEYLCEKGADVNK), 453–482 (QRSSSLHYAACFGRPAIAKILLKFGAYPDL), and 486–518 (DGKTPLDKARERLDDGHREVAAILQSPGEWMSP). The interval 682–702 (AQRSSTSVVVAPRPTSDDPME) is disordered. Residues 1322 to 1392 (QIRAQLKHMT…KYDLKLADCE (71 aa)) form the MIB/HERC2 domain. Composition is skewed to polar residues over residues 1401–1430 (QSMGSASTAAKPSEKGGNTLTSRKSSSTPS) and 1437–1448 (KNQNPEGASNQT). 6 disordered regions span residues 1401 to 1448 (QSMG…SNQT), 1483 to 1512 (NTSSSREARAKHKESGTNQMHKDNISGPSP), 1570 to 1592 (ESVTASQSSSHPDVQSSSPREND), 1845 to 1871 (YPSLSSNNSENIAPSNPSNTSAGQQSA), 1905 to 1930 (ALLGDLDDEDDMDEDNDEEENEDEYE), and 2092 to 2115 (STCLESEEFPQTPDVSSKSGASTL). Positions 1575 to 1592 (SQSSSHPDVQSSSPREND) are enriched in low complexity. Positions 1909-1930 (DLDDEDDMDEDNDEEENEDEYE) are enriched in acidic residues. Residues 2104-2115 (PDVSSKSGASTL) are compositionally biased toward polar residues. An HECT domain is found at 2289-2727 (RKSVLEVEFL…ATKEKGFHLN (439 aa)). Cys-2696 acts as the Glycyl thioester intermediate in catalysis.

Belongs to the UPL family. K-HECT subfamily.

It catalyses the reaction S-ubiquitinyl-[E2 ubiquitin-conjugating enzyme]-L-cysteine + [acceptor protein]-L-lysine = [E2 ubiquitin-conjugating enzyme]-L-cysteine + N(6)-ubiquitinyl-[acceptor protein]-L-lysine.. It participates in protein modification; protein ubiquitination. Functionally, E3 ubiquitin-protein ligase which accepts ubiquitin from an E2 ubiquitin-conjugating enzyme in the form of a thioester and then directly transfers the ubiquitin to targeted substrates. Involved in the negative regulation of the Ras/MAPK signaling pathway in the wing by acting with the E2 enzyme Unc6 and the putative E3 ligases poe and Kcmf1 to mediate the ubiquitination and proteasomal degradation of rl/MAPK. In Drosophila melanogaster (Fruit fly), this protein is E3 ubiquitin-protein ligase Ufd4.